We begin with the raw amino-acid sequence, 495 residues long: Lysine--tRNA ligase (495 aa).

The Mg(2+) site is built by Glu406 and Glu413.

Belongs to the class-II aminoacyl-tRNA synthetase family. Homodimer. Requires Mg(2+) as cofactor.

It localises to the cytoplasm. It carries out the reaction tRNA(Lys) + L-lysine + ATP = L-lysyl-tRNA(Lys) + AMP + diphosphate. The sequence is that of Lysine--tRNA ligase from Staphylococcus aureus (strain COL).